The chain runs to 1388 residues: DNA-directed RNA polymerase subunit beta' (1388 aa).

Zn(2+)-binding residues include Cys70, Cys72, Cys85, and Cys88. Positions 461, 463, and 465 each coordinate Mg(2+). The Zn(2+) site is built by Cys808, Cys882, Cys889, and Cys892.

The protein belongs to the RNA polymerase beta' chain family. The RNAP catalytic core consists of 2 alpha, 1 beta, 1 beta' and 1 omega subunit. When a sigma factor is associated with the core the holoenzyme is formed, which can initiate transcription. Mg(2+) serves as cofactor. Requires Zn(2+) as cofactor.

It catalyses the reaction RNA(n) + a ribonucleoside 5'-triphosphate = RNA(n+1) + diphosphate. In terms of biological role, DNA-dependent RNA polymerase catalyzes the transcription of DNA into RNA using the four ribonucleoside triphosphates as substrates. The sequence is that of DNA-directed RNA polymerase subunit beta' from Acidiphilium cryptum (strain JF-5).